The sequence spans 237 residues: MASGQARPPFEEESPQPSTTVRSPEVVVDDEVPGPSAPWIDPSPQPQSLGLKRKSEWSDESEEELEEELELERAPEPEDTWVVETLCGLKMKLKRKRASSVLPEHHEAFNRLLGDPVVQKFLAWDKDLRVSDKYLLAMVIAYFSRAGLFSWQYQRIHFFLALYLASDMEEDNQAPKQDIFSFLYGKNYSQRPLFHKLRYQLLCSMRWRTWVSPEEMEEIQAYDPEHWVWARDRTLIS.

A disordered region spans residues 1–61 (MASGQARPPF…KRKSEWSDES (61 aa)).

It belongs to the Speedy/Ringo family. In terms of tissue distribution, predominantly expressed in testis.

This Homo sapiens (Human) protein is Speedy protein E4.